Here is a 139-residue protein sequence, read N- to C-terminus: Protein archease (139 aa).

Residues Asp-12, Asp-138, and Ile-139 each contribute to the Ca(2+) site.

This sequence belongs to the archease family.

Activates the tRNA-splicing ligase complex by facilitating the enzymatic turnover of catalytic subunit RtcB. Acts by promoting the guanylylation of RtcB, a key intermediate step in tRNA ligation. Can also alter the NTP specificity of RtcB such that ATP, dGTP or ITP is used efficiently. This is Protein archease from Saccharolobus solfataricus (strain ATCC 35092 / DSM 1617 / JCM 11322 / P2) (Sulfolobus solfataricus).